Consider the following 78-residue polypeptide: Acyl carrier protein (78 aa).

Residues 2–77 (SDIEARVKKI…NAIDYANTHQ (76 aa)) form the Carrier domain. O-(pantetheine 4'-phosphoryl)serine is present on Ser-37.

Belongs to the acyl carrier protein (ACP) family. In terms of processing, 4'-phosphopantetheine is transferred from CoA to a specific serine of apo-ACP by AcpS. This modification is essential for activity because fatty acids are bound in thioester linkage to the sulfhydryl of the prosthetic group.

It localises to the cytoplasm. The protein operates within lipid metabolism; fatty acid biosynthesis. In terms of biological role, carrier of the growing fatty acid chain in fatty acid biosynthesis. This is Acyl carrier protein from Comamonas testosteroni (Pseudomonas testosteroni).